A 335-amino-acid polypeptide reads, in one-letter code: Phosphate acyltransferase (335 aa).

It belongs to the PlsX family. Homodimer. Probably interacts with PlsY.

The protein resides in the cytoplasm. It carries out the reaction a fatty acyl-[ACP] + phosphate = an acyl phosphate + holo-[ACP]. Its pathway is lipid metabolism; phospholipid metabolism. Catalyzes the reversible formation of acyl-phosphate (acyl-PO(4)) from acyl-[acyl-carrier-protein] (acyl-ACP). This enzyme utilizes acyl-ACP as fatty acyl donor, but not acyl-CoA. The sequence is that of Phosphate acyltransferase from Streptococcus equi subsp. equi (strain 4047).